Here is a 107-residue protein sequence, read N- to C-terminus: Nucleoid-associated protein Daro_0807 (107 aa).

The protein belongs to the YbaB/EbfC family. Homodimer.

The protein resides in the cytoplasm. It localises to the nucleoid. Binds to DNA and alters its conformation. May be involved in regulation of gene expression, nucleoid organization and DNA protection. The polypeptide is Nucleoid-associated protein Daro_0807 (Dechloromonas aromatica (strain RCB)).